The following is a 394-amino-acid chain: Myb-like protein R (394 aa).

A run of 2 helical transmembrane segments spans residues isoleucine 11–isoleucine 31 and phenylalanine 99–phenylalanine 119. A Myb-like domain is found at glycine 325–glutamine 377.

Its subcellular location is the membrane. In Dictyostelium discoideum (Social amoeba), this protein is Myb-like protein R (mybR).